The primary structure comprises 286 residues: tRNA (guanine-N(1)-)-methyltransferase (286 aa).

S-adenosyl-L-methionine-binding positions include Gly116 and 140 to 145 (IGDYVL). A disordered region spans residues 232 to 286 (DALPPGSLTPHEEALAAEARLHAGRSAETPPPAGAAGSQAEGPPGTSPSDAAVAH).

The protein belongs to the RNA methyltransferase TrmD family. Homodimer.

It is found in the cytoplasm. The enzyme catalyses guanosine(37) in tRNA + S-adenosyl-L-methionine = N(1)-methylguanosine(37) in tRNA + S-adenosyl-L-homocysteine + H(+). Functionally, specifically methylates guanosine-37 in various tRNAs. The sequence is that of tRNA (guanine-N(1)-)-methyltransferase from Acidothermus cellulolyticus (strain ATCC 43068 / DSM 8971 / 11B).